The sequence spans 328 residues: uncharacterized protein (328 aa).

A signal peptide spans 1 to 25; sequence MKLFNFKKLSMLIAGFTLVTSPALA.

Belongs to the bacterial solute-binding protein 7 family.

Its subcellular location is the periplasm. This is an uncharacterized protein from Haemophilus influenzae (strain ATCC 51907 / DSM 11121 / KW20 / Rd).